A 410-amino-acid chain; its full sequence is LL-diaminopimelate aminotransferase (410 aa).

2 residues coordinate substrate: Tyr15 and Gly42. Residues Tyr72, 108–109 (AK), Tyr132, Asn187, Tyr218, and 246–248 (SFS) each bind pyridoxal 5'-phosphate. Positions 109, 132, and 187 each coordinate substrate. N6-(pyridoxal phosphate)lysine is present on Lys249. Pyridoxal 5'-phosphate contacts are provided by Arg257 and Asn292. Asn292 and Arg388 together coordinate substrate.

It belongs to the class-I pyridoxal-phosphate-dependent aminotransferase family. LL-diaminopimelate aminotransferase subfamily. As to quaternary structure, homodimer. Pyridoxal 5'-phosphate serves as cofactor.

The catalysed reaction is (2S,6S)-2,6-diaminopimelate + 2-oxoglutarate = (S)-2,3,4,5-tetrahydrodipicolinate + L-glutamate + H2O + H(+). It functions in the pathway amino-acid biosynthesis; L-lysine biosynthesis via DAP pathway; LL-2,6-diaminopimelate from (S)-tetrahydrodipicolinate (aminotransferase route): step 1/1. In terms of biological role, involved in the synthesis of meso-diaminopimelate (m-DAP or DL-DAP), required for both lysine and peptidoglycan biosynthesis. Catalyzes the direct conversion of tetrahydrodipicolinate to LL-diaminopimelate. Is also able to catalyze the reverse reaction in vitro, i.e. the transamination of LL-diaminopimelate with 2-oxoglutarate to produce 2-oxo-6-aminopimelate (in equilibrium with tetrahydrodipicolinate) and glutamate. Has maximal aminotransferase activity using 2-oxoglutarate as an amino group acceptor, and cannot use oxaloacetate instead of 2-oxoglutarate, although 2-oxoadipate can substitute with 21% relative activity. Cannot use m-DAP, lysine or ornithine as the amino-group donor, when using 2-oxoglutarate as the amino-group acceptor. The protein is LL-diaminopimelate aminotransferase of Methanothermobacter thermautotrophicus (strain ATCC 29096 / DSM 1053 / JCM 10044 / NBRC 100330 / Delta H) (Methanobacterium thermoautotrophicum).